A 443-amino-acid polypeptide reads, in one-letter code: UDP-N-acetylmuramate--L-alanine ligase (443 aa).

110–116 (GAHGKTS) is a binding site for ATP.

The protein belongs to the MurCDEF family.

The protein localises to the cytoplasm. The enzyme catalyses UDP-N-acetyl-alpha-D-muramate + L-alanine + ATP = UDP-N-acetyl-alpha-D-muramoyl-L-alanine + ADP + phosphate + H(+). Its pathway is cell wall biogenesis; peptidoglycan biosynthesis. In terms of biological role, cell wall formation. The polypeptide is UDP-N-acetylmuramate--L-alanine ligase (Streptococcus equi subsp. equi (strain 4047)).